We begin with the raw amino-acid sequence, 99 residues long: Protein S100-Z (99 aa).

EF-hand domains follow at residues 13 to 48 (ITVF…FLMS) and 50 to 85 (KDPM…LTVA). Ca(2+) is bound by residues S20, E23, D25, K28, E33, D63, N65, D67, E69, and E74.

This sequence belongs to the S-100 family. As to quaternary structure, homodimer. Homodimers may assemble into larger stable oligomers. In larva at 5 days post-fertilization, shows very restricted expression only in a few large cells of the olfactory placode. More widely expressed in the adult. Expressed at higher levels in gut than in spleen, head kidney and gill.

The polypeptide is Protein S100-Z (Danio rerio (Zebrafish)).